Here is a 129-residue protein sequence, read N- to C-terminus: HTH-type transcriptional regulator GlnR (129 aa).

Residues 10–78 form the HTH merR-type domain; the sequence is LFPIGIVMDL…MAGIKQVLLM (69 aa). Residues 13-32 constitute a DNA-binding region (H-T-H motif); it reads IGIVMDLTQLSARQIRYYEE.

In terms of assembly, homodimer under conditions of nitrogen excess. Monomer under conditions of nitrogen-limited. Interacts with feedback-inhibited GlnA in order to stabilizes GlnR-DNA complex.

With respect to regulation, under conditions of nitrogen excess, the DNA binding activity of GlnR is activated by a transient interaction with feedback-inhibited GlnA. Under conditions of nitrogen-limited, GlnR is autoinhibited by its C-terminal region. Functionally, transcription repressor during nitrogen excess. On the contrary of the MerR members, which require longer DNA sites for high-affinity binding, GlnR requires a DNA sequence of 17 nucleotides as minimal binding site. The polypeptide is HTH-type transcriptional regulator GlnR (Bacillus anthracis).